Here is a 336-residue protein sequence, read N- to C-terminus: DNA repair protein XRCC4 (336 aa).

Residues 1–213 (MERKISRIHL…EREKDIKQEG (213 aa)) are interaction with IFFO1. A Phosphoserine; by PRKDC modification is found at Ser53. 2 coiled-coil regions span residues 131-165 (LDTIAENQAKNEHLQKENERLLRDWNDVQGRFEKC) and 184-212 (LNEKKTKIRSLHNKLLNAAQEREKDIKQE). The tract at residues 180–213 (FILVLNEKKTKIRSLHNKLLNAAQEREKDIKQEG) is interaction with LIG4. Ser193 is modified (phosphoserine; by PRKDC). Residue Lys210 forms a Glycyl lysine isopeptide (Lys-Gly) (interchain with G-Cter in SUMO) linkage. Positions 212 to 249 (EGETAICSEMTADRDPVYDESTDEESENQTDLSGLASA) are disordered. Tyr229 carries the post-translational modification Phosphotyrosine. The span at 229–239 (YDESTDEESEN) shows a compositional bias: acidic residues. Residue Ser232 is modified to Phosphoserine. Thr233 is modified (phosphothreonine; by CK2). Phosphoserine occurs at positions 237 and 256. Ser260 bears the Phosphoserine; by PRKDC mark. A disordered region spans residues 264–336 (TDIAPSRKRR…SSPEDLFDEI (73 aa)). The short motif at 270–275 (RKRRQR) is the Nuclear localization signal element. A Glycyl lysine isopeptide (Lys-Gly) (interchain with G-Cter in ubiquitin) cross-link involves residue Lys296. A phosphoserine; by PRKDC mark is found at Ser303, Ser304, Ser315, and Ser320. Residues 317-329 (ENMSLETLRNSSP) show a composition bias toward polar residues. Thr323 is modified (phosphothreonine; by PRKDC). Phosphoserine; by PRKDC occurs at positions 327 and 328.

This sequence belongs to the XRCC4-XLF family. XRCC4 subfamily. Homodimer and homotetramer in solution. Interacts with NHEJ1/XLF; the interaction is direct and is mediated via a head-to-head interaction between N-terminal head regions. Interacts with LIG4; the LIG4-XRCC4 subcomplex has a 1:2 stoichiometry and XRCC4 is required for LIG4 stability. Component of the core long-range non-homologous end joining (NHEJ) complex (also named DNA-PK complex) composed of PRKDC, LIG4, XRCC4, XRCC6/Ku70, XRCC5/Ku86 and NHEJ1/XLF. Additional component of the NHEJ complex includes PAXX. Following autophosphorylation, PRKDC dissociates from DNA, leading to formation of the short-range NHEJ complex, composed of LIG4, XRCC4, XRCC6/Ku70, XRCC5/Ku86 and NHEJ1/XLF. Interacts with PRKDC; the interaction is direct. Interacts with XRCC6/Ku70; the interaction is direct. Interacts with APTX and APLF. Forms a heterotetramer with IFFO1; the interaction involves LIG4-free XRCC4 and leads to the relocalization of IFFO1 to the sites of DNA damage. Interacts with PNKP; mainly interacts with PNKP when phosphorylated at Thr-233, but is also able to interact at much lower level with PNKP when not unphosphorylated. Interacts with POLL (DNA polymerase lambda). In terms of assembly, interacts with XKR4; interacts with the processed form of XKR4, which is cleaved by caspase. Phosphorylated by PRKDC at the C-terminus in response to DNA damage; Ser-260 and Ser-320 constitute the main phosphorylation sites. Phosphorylations by PRKDC at the C-terminus of XRCC4 and NHEJ1/XLF are highly redundant and regulate ability of the XRCC4-NHEJ1/XLF subcomplex to bridge DNA. Phosphorylation by PRKDC does not prevent interaction with NHEJ1/XLF but disrupts ability to bridge DNA and promotes detachment from DNA. Phosphorylation at Ser-327 and Ser-328 by PRKDC promotes recognition by the SCF(FBXW7) complex and subsequent ubiquitination via 'Lys-63'-linked ubiquitin. Phosphorylation at Thr-233 by CK2 promotes interaction with PNKP; regulating PNKP activity and localization to DNA damage sites. Phosphorylation by CK2 promotes interaction with APTX. Post-translationally, ubiquitinated at Lys-296 by the SCF(FBXW7) complex via 'Lys-63'-linked ubiquitination, thereby promoting double-strand break repair: the SCF(FBXW7) complex specifically recognizes XRCC4 when phosphorylated at Ser-327 and Ser-328 by PRKDC, and 'Lys-63'-linked ubiquitination facilitates DNA non-homologous end joining (NHEJ) by enhancing association with XRCC5/Ku80 and XRCC6/Ku70. Monoubiquitinated. In terms of processing, undergoes proteolytic processing by caspase-3 (CASP3). This generates the protein XRCC4, C-terminus (XRCC4/C), which translocates to the cytoplasm and activates phospholipid scramblase activity of XKR4, thereby promoting phosphatidylserine exposure on apoptotic cell surface. In terms of tissue distribution, widely expressed.

The protein resides in the nucleus. It localises to the chromosome. Its subcellular location is the cytoplasm. Functionally, DNA non-homologous end joining (NHEJ) core factor, required for double-strand break repair and V(D)J recombination. Acts as a scaffold protein that regulates recruitment of other proteins to DNA double-strand breaks (DSBs). Associates with NHEJ1/XLF to form alternating helical filaments that bridge DNA and act like a bandage, holding together the broken DNA until it is repaired. The XRCC4-NHEJ1/XLF subcomplex binds to the DNA fragments of a DSB in a highly diffusive manner and robustly bridges two independent DNA molecules, holding the broken DNA fragments in close proximity to one other. The mobility of the bridges ensures that the ends remain accessible for further processing by other repair factors. Plays a key role in the NHEJ ligation step of the broken DNA during DSB repair via direct interaction with DNA ligase IV (LIG4): the LIG4-XRCC4 subcomplex reseals the DNA breaks after the gap filling is completed. XRCC4 stabilizes LIG4, regulates its subcellular localization and enhances LIG4's joining activity. Binding of the LIG4-XRCC4 subcomplex to DNA ends is dependent on the assembly of the DNA-dependent protein kinase complex DNA-PK to these DNA ends. Promotes displacement of PNKP from processed strand break termini. Its function is as follows. Acts as an activator of the phospholipid scramblase activity of XKR4. This form, which is generated upon caspase-3 (CASP3) cleavage, translocates into the cytoplasm and interacts with XKR4, thereby promoting phosphatidylserine scramblase activity of XKR4 and leading to phosphatidylserine exposure on apoptotic cell surface. This Homo sapiens (Human) protein is DNA repair protein XRCC4.